We begin with the raw amino-acid sequence, 179 residues long: MAKLHDYYKDEVVQKLMSQFGYHSVMQVPRVEKITLNMGVGEAIADKKLLDNAAADLAAISGQKPLITKARKSVAGFKIRQGYPIGCKVTLRGERMWEFFERLISIAVPRIRDFRGLSAKSFDGRGNYSMGVREQIIFPEIDYDKVDRVRGLDITITTTAKSDDEGRALLAAFNFPFRK.

It belongs to the universal ribosomal protein uL5 family. Part of the 50S ribosomal subunit; part of the 5S rRNA/L5/L18/L25 subcomplex. Contacts the 5S rRNA and the P site tRNA. Forms a bridge to the 30S subunit in the 70S ribosome.

This is one of the proteins that bind and probably mediate the attachment of the 5S RNA into the large ribosomal subunit, where it forms part of the central protuberance. In the 70S ribosome it contacts protein S13 of the 30S subunit (bridge B1b), connecting the 2 subunits; this bridge is implicated in subunit movement. Contacts the P site tRNA; the 5S rRNA and some of its associated proteins might help stabilize positioning of ribosome-bound tRNAs. The polypeptide is Large ribosomal subunit protein uL5 (Proteus mirabilis (strain HI4320)).